The following is a 206-amino-acid chain: LexA repressor (206 aa).

Residues R28–K48 constitute a DNA-binding region (H-T-H motif). Catalysis depends on for autocatalytic cleavage activity residues S123 and K160.

Belongs to the peptidase S24 family. In terms of assembly, homodimer.

The enzyme catalyses Hydrolysis of Ala-|-Gly bond in repressor LexA.. Its function is as follows. Represses a number of genes involved in the response to DNA damage (SOS response), including recA and lexA. In the presence of single-stranded DNA, RecA interacts with LexA causing an autocatalytic cleavage which disrupts the DNA-binding part of LexA, leading to derepression of the SOS regulon and eventually DNA repair. The polypeptide is LexA repressor (Shewanella pealeana (strain ATCC 700345 / ANG-SQ1)).